Reading from the N-terminus, the 200-residue chain is MNYKYSAEEKQIIYNYILREYGQVDHIIFLSNEHIRVPIEYDILVIKKQNLQILMTFGLGAFKSHNHEENTQERAEIFLELPVDWDFNKHENMWPVHFLINIVKYSYSNHLTLKWLQTFINPSYFNKSNKIAGFLDLSWYGENSLECKINNDFFVSFYQILIIDDEELFYAKTNGIRALSKFFDDGKSRIVDLNRKSFVK.

This is an uncharacterized protein from Ureaplasma parvum serovar 3 (strain ATCC 700970).